The primary structure comprises 437 residues: Lipid II isoglutaminyl synthase (glutamine-hydrolyzing) subunit MurT (437 aa).

Zn(2+) contacts are provided by Cys-202, Cys-205, Cys-224, and Cys-226. Asp-349 is an active-site residue.

Belongs to the MurCDEF family. MurT subfamily. As to quaternary structure, forms a heterodimer with GatD.

The catalysed reaction is beta-D-GlcNAc-(1-&gt;4)-Mur2Ac(oyl-L-Ala-gamma-D-Glu-L-Lys-D-Ala-D-Ala)-di-trans,octa-cis-undecaprenyl diphosphate + L-glutamine + ATP + H2O = beta-D-GlcNAc-(1-&gt;4)-Mur2Ac(oyl-L-Ala-D-isoglutaminyl-L-Lys-D-Ala-D-Ala)-di-trans,octa-cis-undecaprenyl diphosphate + L-glutamate + ADP + phosphate + H(+). It carries out the reaction beta-D-GlcNAc-(1-&gt;4)-Mur2Ac(oyl-L-Ala-gamma-D-Glu-L-Lys-D-Ala-D-Ala)-di-trans,octa-cis-undecaprenyl diphosphate + ATP = beta-D-GlcNAc-(1-&gt;4)-Mur2Ac(oyl-L-Ala-gamma-D-O-P-Glu-L-Lys-D-Ala-D-Ala)-di-trans,octa-cis-undecaprenyl diphosphate + ADP. It catalyses the reaction beta-D-GlcNAc-(1-&gt;4)-Mur2Ac(oyl-L-Ala-gamma-D-O-P-Glu-L-Lys-D-Ala-D-Ala)-di-trans,octa-cis-undecaprenyl diphosphate + NH4(+) = beta-D-GlcNAc-(1-&gt;4)-Mur2Ac(oyl-L-Ala-D-isoglutaminyl-L-Lys-D-Ala-D-Ala)-di-trans,octa-cis-undecaprenyl diphosphate + phosphate + H(+). Its pathway is cell wall biogenesis; peptidoglycan biosynthesis. Functionally, the lipid II isoglutaminyl synthase complex catalyzes the formation of alpha-D-isoglutamine in the cell wall lipid II stem peptide. The MurT subunit catalyzes the ATP-dependent amidation of D-glutamate residue of lipid II, converting it to an isoglutamine residue. The sequence is that of Lipid II isoglutaminyl synthase (glutamine-hydrolyzing) subunit MurT from Staphylococcus aureus (strain COL).